The following is a 301-amino-acid chain: UDP-N-acetylenolpyruvoylglucosamine reductase 1 (301 aa).

In terms of domain architecture, FAD-binding PCMH-type spans 29 to 196 (KIGGPADILI…LEAEFQLQIG (168 aa)). The active site involves R174. S225 (proton donor) is an active-site residue. The active site involves E295.

It belongs to the MurB family. Requires FAD as cofactor.

It localises to the cytoplasm. It catalyses the reaction UDP-N-acetyl-alpha-D-muramate + NADP(+) = UDP-N-acetyl-3-O-(1-carboxyvinyl)-alpha-D-glucosamine + NADPH + H(+). Its pathway is cell wall biogenesis; peptidoglycan biosynthesis. Cell wall formation. The polypeptide is UDP-N-acetylenolpyruvoylglucosamine reductase 1 (Bacillus thuringiensis subsp. konkukian (strain 97-27)).